Here is a 577-residue protein sequence, read N- to C-terminus: MGGCSSAFAVSTRMIRFSRGRVPAAILPVTSNDEPCCSCSPENNNKNNDGGGGGCDGGEHQKGKSWRRWQYRRCGGGGGGGGGRKNAILGDAADVKTAAGFAERYRLGAELGRGEFGVTRRCSDAATGEALACKTIRRKRLRRCRGDAEDVRREVEILRRISALGAGADSVVRLRDACEDSDGVHLVMELCEGGELFDRIFARGHYTERAAAKLARTIVGVVQLCHENGVMHRDLKPENFLFANKSEDSPLKAIDFGLSVFFKPGERFTQVVGSTYYMAPEVLNRSYGPEADVWSAGVILYILLCGVPPFWGDNDEKTVTAILQGGINFQREPWPKVSPHAKDLVSKMLDPDPSTRLTAKEVLEHPWLKNADRAPNVSLGEIVRSRLMQFSAMNKFKKKALGVVAKNLPVEEMDKYTQMFHKMDKDNSGNLTLEDLKLGLQINGHPVPETEIEMLLEAGDIDGNGTLDCEEFVTVLLHIKKMSNEEYLPKAFKFFDKDGNGFIEMEELMDALGDELGPTEQVVKDIIRDIDTDKDGRISYQEFESMMISGSDWRNASRRYSKANFSSLSRKLCKGNS.

A lipid anchor (N-myristoyl glycine) is attached at glycine 2. Residues 105–368 (YRLGAELGRG…AKEVLEHPWL (264 aa)) enclose the Protein kinase domain. ATP-binding positions include 111 to 119 (LGRGEFGVT) and lysine 134. The active-site Proton acceptor is aspartate 234. Positions 374 to 404 (APNVSLGEIVRSRLMQFSAMNKFKKKALGVV) are autoinhibitory domain. EF-hand domains lie at 411 to 446 (EEMD…NGHP), 447 to 482 (VPET…IKKM), 483 to 518 (SNEE…ELGP), and 520 to 553 (EQVV…GSDW). Residues aspartate 424, aspartate 426, serine 428, asparagine 430, aspartate 435, aspartate 460, aspartate 462, asparagine 464, threonine 466, glutamate 471, aspartate 496, aspartate 498, asparagine 500, glutamate 507, aspartate 531, aspartate 533, aspartate 535, arginine 537, and glutamate 542 each coordinate Ca(2+).

Belongs to the protein kinase superfamily. Ser/Thr protein kinase family. CDPK subfamily.

It localises to the membrane. The catalysed reaction is L-seryl-[protein] + ATP = O-phospho-L-seryl-[protein] + ADP + H(+). It catalyses the reaction L-threonyl-[protein] + ATP = O-phospho-L-threonyl-[protein] + ADP + H(+). Its activity is regulated as follows. Activated by calcium. Autophosphorylation may play an important role in the regulation of the kinase activity. May play a role in signal transduction pathways that involve calcium as a second messenger. The polypeptide is Calcium-dependent protein kinase 22 (Oryza sativa subsp. japonica (Rice)).